Consider the following 184-residue polypeptide: U3 small nucleolar ribonucleoprotein protein IMP3 (184 aa).

The S4 RNA-binding domain occupies 109-175; the sequence is RRLPTLLLKL…IKRHVLEYNE (67 aa).

The protein belongs to the universal ribosomal protein uS4 family. In terms of assembly, part of the small subunit (SSU) processome, composed of more than 70 proteins and the RNA chaperone small nucleolar RNA (snoRNA) U3. Component of a heterotrimeric complex containing IMP3, IMP4 and MPHOSPH10. Interacts with MPHOSPH10.

The protein resides in the nucleus. It is found in the nucleolus. Its function is as follows. Component of the 60-80S U3 small nucleolar ribonucleoprotein (U3 snoRNP). Required for the early cleavages during pre-18S ribosomal RNA processing. Part of the small subunit (SSU) processome, first precursor of the small eukaryotic ribosomal subunit. During the assembly of the SSU processome in the nucleolus, many ribosome biogenesis factors, an RNA chaperone and ribosomal proteins associate with the nascent pre-rRNA and work in concert to generate RNA folding, modifications, rearrangements and cleavage as well as targeted degradation of pre-ribosomal RNA by the RNA exosome. This Mus musculus (Mouse) protein is U3 small nucleolar ribonucleoprotein protein IMP3 (Imp3).